Consider the following 2287-residue polypeptide: Serine/threonine-protein kinase MEC1 (2287 aa).

The FAT domain occupies 1310-1864; that stretch reads TLAKKSLETD…LWYISILLNS (555 aa). Residues 1968–2271 form the PI3K/PI4K catalytic domain; sequence FSSQYMVFNS…QVEALTQESC (304 aa). Positions 1974-1980 are G-loop; sequence VFNSLKK. The segment at 2140 to 2148 is catalytic loop; it reads GLGDRHCEN. An activation loop region spans residues 2160-2184; the sequence is HVDFDCLFEKGKKLPVPEIVPFRLT. An FATC domain is found at 2255–2287; it reads LALSVSGQVEALTQESCSVENLSKMYIGWLPFW.

This sequence belongs to the PI3/PI4-kinase family. ATM subfamily.

Its subcellular location is the nucleus. It catalyses the reaction L-seryl-[protein] + ATP = O-phospho-L-seryl-[protein] + ADP + H(+). It carries out the reaction L-threonyl-[protein] + ATP = O-phospho-L-threonyl-[protein] + ADP + H(+). Serine/threonine protein kinase which activates checkpoint signaling upon genotoxic stresses such as ionizing radiation (IR), ultraviolet light (UV), or DNA replication stalling, thereby acting as a DNA damage sensor. Recognizes the substrate consensus sequence [ST]-Q. Recruited to DNA lesions in order to initiate the DNA repair by homologous recombination. Phosphorylates histone H2A to form H2AS128ph (gamma-H2A) at sites of DNA damage, also involved in the regulation of DNA damage response mechanism. Required for cell growth and meiotic recombination. The chain is Serine/threonine-protein kinase MEC1 (MEC1) from Kluyveromyces lactis (strain ATCC 8585 / CBS 2359 / DSM 70799 / NBRC 1267 / NRRL Y-1140 / WM37) (Yeast).